The chain runs to 241 residues: MKTKLTVLITFIILVLLGFWQLNRLKEKKLFLASMQENLTSPAIDLAKIQDNLPYHKVKITGHFLPDKDIYLYGRRSMSSEKDGYYLVTPFKTDEDKIILVARGWFSNRNKNIITQATNDQPHELIGVTMPSEKTRSYLPANDIKNNVWLTLDLQEASKVLGLNLENFYLIEESKDISNLDILLPLSINHLAAIRNDHLEYAFTWFGLAASLVVIYRIYKRSVSSRGLETRSRIKQDKSSF.

2 consecutive transmembrane segments (helical) span residues 5–25 (LTVLITFIILVLLGFWQLNRL) and 199–219 (LEYAFTWFGLAASLVVIYRIY).

This sequence belongs to the SURF1 family.

It is found in the cell membrane. This is SURF1-like protein from Rickettsia bellii (strain RML369-C).